Here is a 218-residue protein sequence, read N- to C-terminus: Probable septum site-determining protein MinC (218 aa).

This sequence belongs to the MinC family. Interacts with MinD and FtsZ.

Its function is as follows. Cell division inhibitor that blocks the formation of polar Z ring septums. Rapidly oscillates between the poles of the cell to destabilize FtsZ filaments that have formed before they mature into polar Z rings. Prevents FtsZ polymerization. This chain is Probable septum site-determining protein MinC, found in Kosmotoga olearia (strain ATCC BAA-1733 / DSM 21960 / TBF 19.5.1).